Reading from the N-terminus, the 1378-residue chain is Carboxypeptidase D (1378 aa).

An N-terminal signal peptide occupies residues 1-37 (MASGWDERPPWRLESLRLLPPPPLLLLLLLLRSSAQA). The Extracellular portion of the chain corresponds to 38-1297 (AHIKKAEATT…DNRIFGLPRE (1260 aa)). One can recognise a Peptidase M14 1 domain in the interval 62 to 380 (HYYHEAALGE…ESLITLIEKV (319 aa)). Positions 139 and 142 each coordinate Zn(2+). Residues 162–164 (RGD) carry the Cell attachment site motif. 2 N-linked (GlcNAc...) asparagine glycosylation sites follow: Asn172 and Asn217. The tract at residues 189-232 (RAREGDCGLGDSGPPGTSGRDNSRGRDLNRSFPDQFSTGEPPSL) is disordered. His257 is a binding site for Zn(2+). Position 265 is a phosphotyrosine (Tyr265). Ser270 carries the post-translational modification Phosphoserine. Glu350 serves as the catalytic Proton donor/acceptor. Asn399, Asn410, Asn429, and Asn522 each carry an N-linked (GlcNAc...) asparagine glycan. In terms of domain architecture, Peptidase M14 2 spans 502 to 792 (HHHHFPDMEI…RSLIQFMKQV (291 aa)). Zn(2+)-binding residues include His564 and Glu567. The N-linked (GlcNAc...) asparagine glycan is linked to Asn626. Position 671 (His671) interacts with Zn(2+). The active-site Proton donor/acceptor is the Glu762. 6 N-linked (GlcNAc...) asparagine glycosylation sites follow: Asn811, Asn855, Asn867, Asn879, Asn953, and Asn976. Residues 875-898 (TDANNESKKGKGHSTSTDDTSDPT) form a disordered region. Positions 930-1209 (RYHSYKDLSE…KSLLSMLVEV (280 aa)) constitute a Peptidase M14 3 domain. Residues 1039-1048 (RERAQEKDCT) are compositionally biased toward basic and acidic residues. Residues 1039-1068 (RERAQEKDCTSKTGHTNARGRDLDTDFTSN) form a disordered region. N-linked (GlcNAc...) asparagine glycosylation is found at Asn1068 and Asn1140. A helical membrane pass occupies residues 1298-1318 (LVVTVSGATMSALILTACIIW). Residues Cys1315, Cys1319, and Cys1321 are each lipidated (S-palmitoyl cysteine). Residues 1319–1378 (CICSIKSNRHKDGFHRLRQHHDEYEDEIRMMSTGSKKSLLSHEFQDETDTEEETLYSSKH) lie on the Cytoplasmic side of the membrane. Ser1356 and Ser1359 each carry phosphoserine. A disordered region spans residues 1357–1378 (LLSHEFQDETDTEEETLYSSKH). A phosphothreonine mark is found at Thr1366 and Thr1368.

It belongs to the peptidase M14 family. Requires Zn(2+) as cofactor. As to expression, isoform 1 is widely expressed with highest levels in the hippocampus, spinal cord, atrium, colon, testis and ovaries. Detected in the liver of females but not males. Isoform 2 is not detected in brain or lung.

Its subcellular location is the cell membrane. The protein localises to the nucleus. It carries out the reaction Releases C-terminal Arg and Lys from polypeptides.. The chain is Carboxypeptidase D from Rattus norvegicus (Rat).